Reading from the N-terminus, the 341-residue chain is tRNA-specific 2-thiouridylase MnmA (341 aa).

Residues 8–15 and M34 contribute to the ATP site; that span reads GMSGGVDS. The active-site Nucleophile is the C94. C94 and C188 are disulfide-bonded. G118 lines the ATP pocket. Positions 136 to 138 are interaction with tRNA; the sequence is KDQ. The active-site Cysteine persulfide intermediate is C188. An interaction with tRNA region spans residues 290 to 291; that stretch reads RY.

It belongs to the MnmA/TRMU family.

The protein resides in the cytoplasm. The enzyme catalyses S-sulfanyl-L-cysteinyl-[protein] + uridine(34) in tRNA + AH2 + ATP = 2-thiouridine(34) in tRNA + L-cysteinyl-[protein] + A + AMP + diphosphate + H(+). Its function is as follows. Catalyzes the 2-thiolation of uridine at the wobble position (U34) of tRNA, leading to the formation of s(2)U34. The protein is tRNA-specific 2-thiouridylase MnmA of Sulfurimonas denitrificans (strain ATCC 33889 / DSM 1251) (Thiomicrospira denitrificans (strain ATCC 33889 / DSM 1251)).